The primary structure comprises 512 residues: MKNTYYITTPIYYVNDVPHIGHAYTSVASDVIARFIRLCGFDVMFLTGTDEHGQKVEKAAINKNIDPQKFTDHTSESFRHLMNVMNISNDDFIRTTESRHKEAVAIFWQKLLDNGTIYEGFYEGWYAVRDEAFFDESELTSDGLAPTGAPVEWVKEPSYFFNLSKWQDKLLEFYEANPDFIRPISRRNEVISFVKSGLKDLSVSRTTFNWGIKVPNNEKHVIYVWLDALASYISALGYPDKQSNYGKFWPADLHVVGKDILRFHAVYWPAFLMAAEIPLPKTIMAHGWWTNEGQKISKSLGNTIDPIKLIDEFGVDQVRYFLMREVTFGADGNFARSNLVTRINSELSNKIGNLLQRTTAFVYKNNDGKVPLLMQGIIDKIYELPILKTASKFAEQNILLMEKTEINKVLENIINLSEEANIYIDSEAPWNLKKTDPEKMSEVLYTLLEVLRYIAIMLQPFIPSSANKMLDQLGVNKEERLFKHLIRDYALRAGSSILEPAIIFPRFEGDVV.

Positions 12–22 (YYVNDVPHIGH) match the 'HIGH' region motif. The 'KMSKS' region motif lies at 295-299 (KISKS). Residue K298 coordinates ATP.

It belongs to the class-I aminoacyl-tRNA synthetase family. MetG type 2B subfamily. In terms of assembly, monomer.

Its subcellular location is the cytoplasm. The enzyme catalyses tRNA(Met) + L-methionine + ATP = L-methionyl-tRNA(Met) + AMP + diphosphate. In terms of biological role, is required not only for elongation of protein synthesis but also for the initiation of all mRNA translation through initiator tRNA(fMet) aminoacylation. This chain is Methionine--tRNA ligase, found in Rickettsia felis (strain ATCC VR-1525 / URRWXCal2) (Rickettsia azadi).